The primary structure comprises 95 residues: RING finger protein Z (95 aa).

Residue Gly2 is the site of N-myristoyl glycine; by host attachment. Residues 38 to 74 (CKRCWFATKGLIACSDHYLCLNCLTIMLSDGNFCEVC) form an RING-type; atypical zinc finger. The PTAP/PSAP motif signature appears at 88–91 (PSAP).

This sequence belongs to the arenaviridae Z protein family. In terms of assembly, interacts with protein NP; this interaction probably directs the encapsidated genome to budding sites. Interacts (via RING domain) with polymerase L; this interaction inhibits viral transcription and replication, Z partially blocks the product exit tunnel for the releasing nascent RNA product. Interacts with the glycoprotein complex; this interaction plays a role in virion budding. Interacts with host eIF4E; this interaction results in eIF4E reduced affinity for its substrate, the 5'-m7 G cap structure. Interacts (via late-budding domain) with host TSG101; this interaction is essential for budding and release of viral particles. Interacts with host RPLP0; this interaction may serve to load ribosome-like particles inside the virion. Interacts with host PML; this interaction induces PML bodies redistribution in the cytoplasm upon viral infection. Post-translationally, myristoylation is required for the role of RING finger protein Z in assembly and budding.

The protein localises to the virion. It is found in the host cytoplasm. Its subcellular location is the host perinuclear region. It localises to the host cell membrane. Functionally, plays a crucial role in virion assembly and budding. Expressed late in the virus life cycle, it acts as an inhibitor of viral transcription and RNA synthesis by interacting with the viral polymerase L. Presumably recruits the NP encapsidated genome to cellular membranes at budding sites via direct interaction with NP. Plays critical roles in the final steps of viral release by interacting with host TSG101, a member of the vacuolar protein-sorting pathway and using other cellular host proteins involved in vesicle formation pathway. The budding of the virus progeny occurs after association of protein Z with the viral glycoprotein complex SSP-GP1-GP2 at the cell periphery, step that requires myristoylation of protein Z. Also selectively represses protein production by associating with host eIF4E. In cell-based minigenome assay, has an inhibitory effect on the ribonucleoprotein machinery (vRNP), which is responsible for the replication and transcription of the viral genome. The sequence is that of RING finger protein Z from Sooretamys angouya (Paraguayan rice rat).